The sequence spans 197 residues: Elongation factor Ts (197 aa).

Positions 81-84 are involved in Mg(2+) ion dislocation from EF-Tu; the sequence is TDFV.

This sequence belongs to the EF-Ts family.

The protein resides in the cytoplasm. Functionally, associates with the EF-Tu.GDP complex and induces the exchange of GDP to GTP. It remains bound to the aminoacyl-tRNA.EF-Tu.GTP complex up to the GTP hydrolysis stage on the ribosome. The chain is Elongation factor Ts from Persephonella marina (strain DSM 14350 / EX-H1).